The sequence spans 413 residues: 3-oxoacyl-[acyl-carrier-protein] synthase 2 (413 aa).

The Ketosynthase family 3 (KS3) domain maps to 3 to 412; it reads KRRVVVTGLG…GTNGSLIFKK (410 aa). Catalysis depends on for beta-ketoacyl synthase activity residues cysteine 164, histidine 304, and histidine 341.

The protein belongs to the thiolase-like superfamily. Beta-ketoacyl-ACP synthases family. As to quaternary structure, homodimer.

It carries out the reaction a fatty acyl-[ACP] + malonyl-[ACP] + H(+) = a 3-oxoacyl-[ACP] + holo-[ACP] + CO2. The enzyme catalyses (9Z)-hexadecenoyl-[ACP] + malonyl-[ACP] + H(+) = 3-oxo-(11Z)-octadecenoyl-[ACP] + holo-[ACP] + CO2. Its pathway is lipid metabolism; fatty acid biosynthesis. In terms of biological role, involved in the type II fatty acid elongation cycle. Catalyzes the elongation of a wide range of acyl-ACP by the addition of two carbons from malonyl-ACP to an acyl acceptor. Can efficiently catalyze the conversion of palmitoleoyl-ACP (cis-hexadec-9-enoyl-ACP) to cis-vaccenoyl-ACP (cis-octadec-11-enoyl-ACP), an essential step in the thermal regulation of fatty acid composition. This chain is 3-oxoacyl-[acyl-carrier-protein] synthase 2 (fabF), found in Escherichia coli O157:H7.